Here is a 215-residue protein sequence, read N- to C-terminus: MSNNYPHPLLAREGWPFIAIALAVALVINGAAGFGWALPFWLLFIFVVQFFRDPPRPIPQGAKDVLSPADGRIVAIEPVRDPYLDRDSVKISVFMNVFNVHSNRSPVDGEVVARWYNAGRFVNAALDKASVENERNALHLRTRDGHDVTCVQVAGLIARRILCYVEAGASLARGQRYGFIRFGSRVDVYLPAGSRARVTIGDKVSASSTILAELP.

The Schiff-base intermediate with substrate; via pyruvic acid role is filled by S184. Pyruvic acid (Ser); by autocatalysis is present on S184.

Belongs to the phosphatidylserine decarboxylase family. PSD-A subfamily. As to quaternary structure, heterodimer of a large membrane-associated beta subunit and a small pyruvoyl-containing alpha subunit. It depends on pyruvate as a cofactor. Post-translationally, is synthesized initially as an inactive proenzyme. Formation of the active enzyme involves a self-maturation process in which the active site pyruvoyl group is generated from an internal serine residue via an autocatalytic post-translational modification. Two non-identical subunits are generated from the proenzyme in this reaction, and the pyruvate is formed at the N-terminus of the alpha chain, which is derived from the carboxyl end of the proenzyme. The post-translation cleavage follows an unusual pathway, termed non-hydrolytic serinolysis, in which the side chain hydroxyl group of the serine supplies its oxygen atom to form the C-terminus of the beta chain, while the remainder of the serine residue undergoes an oxidative deamination to produce ammonia and the pyruvoyl prosthetic group on the alpha chain.

The protein localises to the cell membrane. It catalyses the reaction a 1,2-diacyl-sn-glycero-3-phospho-L-serine + H(+) = a 1,2-diacyl-sn-glycero-3-phosphoethanolamine + CO2. It functions in the pathway phospholipid metabolism; phosphatidylethanolamine biosynthesis; phosphatidylethanolamine from CDP-diacylglycerol: step 2/2. Its function is as follows. Catalyzes the formation of phosphatidylethanolamine (PtdEtn) from phosphatidylserine (PtdSer). The chain is Phosphatidylserine decarboxylase proenzyme from Aromatoleum aromaticum (strain DSM 19018 / LMG 30748 / EbN1) (Azoarcus sp. (strain EbN1)).